Reading from the N-terminus, the 1386-residue chain is Rab3 GTPase-activating protein non-catalytic subunit (1386 aa).

A disordered region spans residues 31 to 69; the sequence is GALRRDPSKTSNWEDDSWGAWEETEPQEPEEEGNTSKTQ. S38 bears the Phosphoserine mark. The segment covering 43-63 has biased composition (acidic residues); the sequence is WEDDSWGAWEETEPQEPEEEG. S448 bears the Phosphoserine mark. At T899 the chain carries Phosphothreonine. Phosphoserine is present on S914. Basic and acidic residues predominate over residues 959 to 973; sequence REKDVENPDEPREGI. Residues 959-982 are disordered; the sequence is REKDVENPDEPREGIARSPPEVSE. S976 carries the phosphoserine modification.

The protein belongs to the Rab3-GAP regulatory subunit family. The Rab3 GTPase-activating complex is a heterodimer composed of Rab3gap1 and Rab3gap2. The Rab3 GTPase-activating complex interacts with DMXL2. Interacts with LMAN1.

It is found in the cytoplasm. It localises to the endoplasmic reticulum. Regulatory subunit of the Rab3 GTPase-activating (Rab3GAP) complex composed of RAB3GAP1 and RAB3GAP2, which has GTPase-activating protein (GAP) activity towards various Rab3 subfamily members (RAB3A, RAB3B, RAB3C and RAB3D), RAB5A and RAB43, and guanine nucleotide exchange factor (GEF) activity towards RAB18. As part of the Rab3GAP complex, acts as a GAP for Rab3 proteins by converting active RAB3-GTP to the inactive form RAB3-GDP. Rab3 proteins are involved in regulated exocytosis of neurotransmitters and hormones. The Rab3GAP complex acts as a GEF for RAB18 by promoting the conversion of inactive RAB18-GDP to the active form RAB18-GTP. Recruits and stabilizes RAB18 at the cis-Golgi membrane in fibroblasts where RAB18 is most likely activated. Also involved in RAB18 recruitment at the endoplasmic reticulum (ER) membrane where it maintains proper ER structure. Required for normal eye and brain development. May participate in neurodevelopmental processes such as proliferation, migration and differentiation before synapse formation, and non-synaptic vesicular release of neurotransmitters. The polypeptide is Rab3 GTPase-activating protein non-catalytic subunit (Rattus norvegicus (Rat)).